Reading from the N-terminus, the 589-residue chain is Aspartate--tRNA ligase (589 aa).

E176 lines the L-aspartate pocket. An aspartate region spans residues 200-203; sequence QLFK. R222 provides a ligand contact to L-aspartate. Residues 222 to 224 and Q231 contribute to the ATP site; that span reads RDE. H449 lines the L-aspartate pocket. E483 provides a ligand contact to ATP. R490 is an L-aspartate binding site. 535-538 serves as a coordination point for ATP; it reads GLDR.

It belongs to the class-II aminoacyl-tRNA synthetase family. Type 1 subfamily. Homodimer.

It localises to the cytoplasm. The enzyme catalyses tRNA(Asp) + L-aspartate + ATP = L-aspartyl-tRNA(Asp) + AMP + diphosphate. In terms of biological role, catalyzes the attachment of L-aspartate to tRNA(Asp) in a two-step reaction: L-aspartate is first activated by ATP to form Asp-AMP and then transferred to the acceptor end of tRNA(Asp). This chain is Aspartate--tRNA ligase, found in Enterococcus faecalis (strain ATCC 700802 / V583).